The sequence spans 204 residues: 3-dehydroquinate dehydratase (204 aa).

Residues Ser-9, 30–32, and Arg-57 contribute to the 3-dehydroquinate site; that span reads ELR. Residue His-108 is the Proton donor/acceptor of the active site. The active-site Schiff-base intermediate with substrate is the Lys-133. The 3-dehydroquinate site is built by Arg-167, Thr-186, and Gln-190.

This sequence belongs to the type-I 3-dehydroquinase family. As to quaternary structure, homodimer.

It carries out the reaction 3-dehydroquinate = 3-dehydroshikimate + H2O. It participates in metabolic intermediate biosynthesis; chorismate biosynthesis; chorismate from D-erythrose 4-phosphate and phosphoenolpyruvate: step 3/7. In terms of biological role, involved in the third step of the chorismate pathway, which leads to the biosynthesis of aromatic amino acids. Catalyzes the cis-dehydration of 3-dehydroquinate (DHQ) and introduces the first double bond of the aromatic ring to yield 3-dehydroshikimate. This chain is 3-dehydroquinate dehydratase, found in Metallosphaera sedula (strain ATCC 51363 / DSM 5348 / JCM 9185 / NBRC 15509 / TH2).